The chain runs to 232 residues: MKGFKIAIDGPAASGKSTICKLIAEKLNCVHIDTGLMFRVITLYLIKNKVNWAQITEENYLKLLLNNCNIYYEKNHIYCNYQKMCLEIKLKRIEIDNKVSLVASLPFIRQKLLLLQQEIIKNNPYLIMDGRDIGTIVMPNADLKIFLTANIEQRILRRVNEFKSNKSVNELQKITNNIKLRDHKDFNRLISPLKKAEDAILLDTTDINIIETVNQIHNLILHKKKLLNQNEF.

Gly10 to Thr18 lines the ATP pocket.

It belongs to the cytidylate kinase family. Type 1 subfamily.

It is found in the cytoplasm. It carries out the reaction CMP + ATP = CDP + ADP. The enzyme catalyses dCMP + ATP = dCDP + ADP. In Phytoplasma mali (strain AT), this protein is Cytidylate kinase.